A 250-amino-acid chain; its full sequence is MSDSAVATSASPVIVQAASGEKKVSTKKAAATPKSKKSTAAPPSHPPTQQMVDASIKNLKERGGSSLLAIKKYIGATYKCDAQKLAPFIKKYLKNAVANGKLIQTKGKGASGSFKLSRSAKKDAKPKASAVEKKTKKVNASAAAATKRSSSTSTTKKAAGAADKKLSKSAAAKKNVEKKKADKEKAKDAKKTGTIKAKLTTAKAKSSATKPKTPKPKTTSAKPKKVVSATTPKKTAVKKPKAKTASATKK.

Disordered regions lie at residues 17-53 and 104-250; these read AASG…QMVD and QTKG…ATKK. Residues 27–42 show a composition bias toward low complexity; it reads KKAAATPKSKKSTAAP. One can recognise an H15 domain in the interval 44-118; sequence SHPPTQQMVD…GASGSFKLSR (75 aa). Residues 120 to 133 show a composition bias toward basic and acidic residues; that stretch reads AKKDAKPKASAVEK. Residues 138–161 are compositionally biased toward low complexity; the sequence is VNASAAAATKRSSSTSTTKKAAGA. Positions 174 to 191 are enriched in basic and acidic residues; sequence KNVEKKKADKEKAKDAKK. The span at 192–234 shows a compositional bias: low complexity; the sequence is TGTIKAKLTTAKAKSSATKPKTPKPKTTSAKPKKVVSATTPKK. A compositionally biased stretch (basic residues) spans 235–250; it reads TAVKKPKAKTASATKK.

It belongs to the histone H1/H5 family.

It is found in the nucleus. The protein localises to the chromosome. Histones H1 are necessary for the condensation of nucleosome chains into higher-order structures. The protein is Histone H1.3 (His1.3) of Drosophila virilis (Fruit fly).